The primary structure comprises 288 residues: Bis(5'-nucleosyl)-tetraphosphatase, symmetrical (288 aa).

Belongs to the Ap4A hydrolase family.

The catalysed reaction is P(1),P(4)-bis(5'-adenosyl) tetraphosphate + H2O = 2 ADP + 2 H(+). In terms of biological role, hydrolyzes diadenosine 5',5'''-P1,P4-tetraphosphate to yield ADP. In Pseudomonas putida (strain W619), this protein is Bis(5'-nucleosyl)-tetraphosphatase, symmetrical.